The following is a 345-amino-acid chain: Ubiquitin-associated domain-containing protein 2 (345 aa).

An N-terminal signal peptide occupies residues 1–35 (MFTSTGSSGLYKAPLSKSLLLVPSALSLLLALLLP). Residues 36–91 (HCQKLFVYDLHAVKNDFQIWRLICGRIICLDLKDTFCSSLLIYNFRIFERRYGSRK) lie on the Extracellular side of the membrane. Residues 92-112 (FASFLLGSWVLSALFDFLLVE) traverse the membrane as a helical segment. The Cytoplasmic portion of the chain corresponds to 113–125 (AMQYFFGITAASN). Residues 126 to 146 (LPSGFLAPVFALFVPFYCSIP) traverse the membrane as a helical segment. Over 147 to 163 (RVQVAQILGPLSITNKT) the chain is Extracellular. Asn-161 carries N-linked (GlcNAc...) asparagine glycosylation. Residues 164–184 (LIYILGLQLFTSGSYIWIVAI) traverse the membrane as a helical segment. The Cytoplasmic segment spans residues 185–345 (SGLMSGLCYN…NVATNFLLQH (161 aa)). In terms of domain architecture, UBA spans 305-345 (EVSEEQVARLMEMGFSRGDALEALRASNNDLNVATNFLLQH).

As to quaternary structure, interacts with LMBR1L, FAF2, AMFR and VCP.

It localises to the endoplasmic reticulum membrane. Functionally, restricts trafficking of FAF2 from the endoplasmic reticulum to lipid droplets. In association with LMBR1L and E3 ubiquitin-protein ligase AMFR, negatively regulates the canonical Wnt signaling pathway in the lymphocytes by promoting the ubiquitin-mediated degradation of CTNNB1 and Wnt receptors FZD6 and LRP6. The sequence is that of Ubiquitin-associated domain-containing protein 2 (UBAC2) from Macaca fascicularis (Crab-eating macaque).